The primary structure comprises 155 residues: 6,7-dimethyl-8-ribityllumazine synthase (155 aa).

5-amino-6-(D-ribitylamino)uracil-binding positions include F18, 49-51 (ALE), and 75-77 (CVI). Residue 80–81 (ET) participates in (2S)-2-hydroxy-3-oxobutyl phosphate binding. Catalysis depends on H83, which acts as the Proton donor. N108 contributes to the 5-amino-6-(D-ribitylamino)uracil binding site. R122 lines the (2S)-2-hydroxy-3-oxobutyl phosphate pocket.

The protein belongs to the DMRL synthase family.

It catalyses the reaction (2S)-2-hydroxy-3-oxobutyl phosphate + 5-amino-6-(D-ribitylamino)uracil = 6,7-dimethyl-8-(1-D-ribityl)lumazine + phosphate + 2 H2O + H(+). Its pathway is cofactor biosynthesis; riboflavin biosynthesis; riboflavin from 2-hydroxy-3-oxobutyl phosphate and 5-amino-6-(D-ribitylamino)uracil: step 1/2. Catalyzes the formation of 6,7-dimethyl-8-ribityllumazine by condensation of 5-amino-6-(D-ribitylamino)uracil with 3,4-dihydroxy-2-butanone 4-phosphate. This is the penultimate step in the biosynthesis of riboflavin. The chain is 6,7-dimethyl-8-ribityllumazine synthase from Bartonella henselae (strain ATCC 49882 / DSM 28221 / CCUG 30454 / Houston 1) (Rochalimaea henselae).